The chain runs to 286 residues: Ribosomal RNA small subunit methyltransferase A (286 aa).

S-adenosyl-L-methionine-binding residues include histidine 11, leucine 13, glycine 44, glutamate 65, aspartate 90, and asparagine 115.

The protein belongs to the class I-like SAM-binding methyltransferase superfamily. rRNA adenine N(6)-methyltransferase family. RsmA subfamily.

The protein localises to the cytoplasm. The catalysed reaction is adenosine(1518)/adenosine(1519) in 16S rRNA + 4 S-adenosyl-L-methionine = N(6)-dimethyladenosine(1518)/N(6)-dimethyladenosine(1519) in 16S rRNA + 4 S-adenosyl-L-homocysteine + 4 H(+). In terms of biological role, specifically dimethylates two adjacent adenosines (A1518 and A1519) in the loop of a conserved hairpin near the 3'-end of 16S rRNA in the 30S particle. May play a critical role in biogenesis of 30S subunits. The protein is Ribosomal RNA small subunit methyltransferase A of Nostoc punctiforme (strain ATCC 29133 / PCC 73102).